The chain runs to 243 residues: 1-(5-phosphoribosyl)-5-[(5-phosphoribosylamino)methylideneamino] imidazole-4-carboxamide isomerase (243 aa).

D10 serves as the catalytic Proton acceptor. Residue D129 is the Proton donor of the active site.

Belongs to the HisA/HisF family.

The protein resides in the cytoplasm. The catalysed reaction is 1-(5-phospho-beta-D-ribosyl)-5-[(5-phospho-beta-D-ribosylamino)methylideneamino]imidazole-4-carboxamide = 5-[(5-phospho-1-deoxy-D-ribulos-1-ylimino)methylamino]-1-(5-phospho-beta-D-ribosyl)imidazole-4-carboxamide. The protein operates within amino-acid biosynthesis; L-histidine biosynthesis; L-histidine from 5-phospho-alpha-D-ribose 1-diphosphate: step 4/9. This chain is 1-(5-phosphoribosyl)-5-[(5-phosphoribosylamino)methylideneamino] imidazole-4-carboxamide isomerase, found in Nocardia farcinica (strain IFM 10152).